The following is a 526-amino-acid chain: 4-alpha-glucanotransferase (526 aa).

Belongs to the disproportionating enzyme family.

The protein resides in the cytoplasm. It carries out the reaction Transfers a segment of a (1-&gt;4)-alpha-D-glucan to a new position in an acceptor, which may be glucose or a (1-&gt;4)-alpha-D-glucan.. This chain is 4-alpha-glucanotransferase (malQ), found in Chlamydia pneumoniae (Chlamydophila pneumoniae).